The sequence spans 465 residues: Phenylalanine--tRNA ligase alpha subunit (465 aa).

Residues Thr-309, 348 to 350 (QLD), and Phe-388 contribute to the L-phenylalanine site. Glu-390 contacts Mg(2+).

It belongs to the class-II aminoacyl-tRNA synthetase family. Phe-tRNA synthetase alpha subunit type 2 subfamily. Tetramer of two alpha and two beta subunits. The cofactor is Mg(2+).

The protein resides in the cytoplasm. It carries out the reaction tRNA(Phe) + L-phenylalanine + ATP = L-phenylalanyl-tRNA(Phe) + AMP + diphosphate + H(+). This chain is Phenylalanine--tRNA ligase alpha subunit, found in Sulfolobus acidocaldarius (strain ATCC 33909 / DSM 639 / JCM 8929 / NBRC 15157 / NCIMB 11770).